The following is a 152-amino-acid chain: Large ribosomal subunit protein bL9 (152 aa).

The protein belongs to the bacterial ribosomal protein bL9 family.

In terms of biological role, binds to the 23S rRNA. The polypeptide is Large ribosomal subunit protein bL9 (Mycobacterium sp. (strain JLS)).